Here is a 326-residue protein sequence, read N- to C-terminus: 4-hydroxythreonine-4-phosphate dehydrogenase (326 aa).

Substrate contacts are provided by His132 and Thr133. 3 residues coordinate a divalent metal cation: His162, His207, and His262. Substrate contacts are provided by Lys270, Asn279, and Arg288.

It belongs to the PdxA family. In terms of assembly, homodimer. Requires Zn(2+) as cofactor. The cofactor is Mg(2+). It depends on Co(2+) as a cofactor.

The protein resides in the cytoplasm. It carries out the reaction 4-(phosphooxy)-L-threonine + NAD(+) = 3-amino-2-oxopropyl phosphate + CO2 + NADH. Its pathway is cofactor biosynthesis; pyridoxine 5'-phosphate biosynthesis; pyridoxine 5'-phosphate from D-erythrose 4-phosphate: step 4/5. Functionally, catalyzes the NAD(P)-dependent oxidation of 4-(phosphooxy)-L-threonine (HTP) into 2-amino-3-oxo-4-(phosphooxy)butyric acid which spontaneously decarboxylates to form 3-amino-2-oxopropyl phosphate (AHAP). This chain is 4-hydroxythreonine-4-phosphate dehydrogenase, found in Ruegeria sp. (strain TM1040) (Silicibacter sp.).